The sequence spans 649 residues: SKQQASQVLVRKRRANSMLEETKQGNLERECIEELCNKEEAREVFENDPETDYFYPKYLVCLRSFQSGLFTAARQSTDAYPDLRSCVNAIPDQCSPLPCNEDGYMSCKDGKASFTCTCKPGWQGERCEFDINECKDPSNINGGCSQICDNTPGSYHCSCKSGFVMLSNKKDCKDVDECSLKPNMCGTAVCKNIPGDFECECPEGYRYNLKSKSCEDVDECSENMCAQLCVNYPGGYTCYCDGKKGFKLAQDQKSCEAVSVCLPLNLDTKYELLYLAEQFAGVVLYLKFRLPEISRFSAEFDFRTYDSQGVILYAESIDHSAWLLIALRGGKIEVQLKNEHTSKITTGGDIINNGLWNMVSVEELEHSISIKIAKEAVMDINKPGPLFKPENGLLETKVYFAGFPRKVESELIKPINPRLDGCIRSWNLMKQGASGIKEIIQEKQNKHCLVTVEKGSYYPGSGIAEFHIDYNNGSNAEGWHINVTLNIRPSTGTGVMLALVSSNNTVPFAVSLVDSTSEKSQDIVISVENTVIYRIQALSLCSYQRSHLEFRVNRNNLELLTPLKIETISQEELQTQLAILDKAMKGKVATYLGGLPDVPFSATPVNAFYNGCMEVNINGVELDLDEAISKHNDIRAHSCPSVWKKTKNS.

Positions 1–14 (SKQQASQVLVRKRR) are excised as a propeptide. Positions 15-60 (ANSMLEETKQGNLERECIEELCNKEEAREVFENDPETDYFYPKYLV) constitute a Gla domain. 11 positions are modified to 4-carboxyglutamate: Glu20, Glu21, Glu28, Glu30, Glu33, Glu34, Glu39, Glu40, Glu43, Glu46, and Glu50. A disulfide bridge links Cys31 with Cys36. The thrombin-sensitive stretch occupies residues 61 to 89 (CLRSFQSGLFTAARQSTDAYPDLRSCVNA). One can recognise an EGF-like 1 domain in the interval 90–128 (IPDQCSPLPCNEDGYMSCKDGKASFTCTCKPGWQGERCE). Disulfide bonds link Cys94/Cys107, Cys99/Cys116, Cys118/Cys127, Cys134/Cys148, Cys144/Cys157, Cys159/Cys172, Cys178/Cys190, Cys185/Cys199, Cys201/Cys214, Cys220/Cys229, Cys225/Cys238, Cys240/Cys255, and Cys422/Cys448. Residue Asp109 is modified to (3R)-3-hydroxyaspartate. The EGF-like 2; calcium-binding domain occupies 130–173 (DINECKDPSNINGGCSQICDNTPGSYHCSCKSGFVMLSNKKDCK). The EGF-like 3; calcium-binding domain maps to 174-215 (DVDECSLKPNMCGTAVCKNIPGDFECECPEGYRYNLKSKSCE). Residues 216–256 (DVDECSENMCAQLCVNYPGGYTCYCDGKKGFKLAQDQKSCE) enclose the EGF-like 4; calcium-binding domain. Laminin G-like domains follow at residues 272-448 (LLYL…NKHC) and 457-639 (YYPG…AHSC). 3 N-linked (GlcNAc...) asparagine glycosylation sites follow: Asn472, Asn482, and Asn503. An intrachain disulfide couples Cys612 to Cys639.

The iron and 2-oxoglutarate dependent 3-hydroxylation of aspartate and asparagine is (R) stereospecific within EGF domains. As to expression, plasma.

The protein localises to the secreted. Its function is as follows. Anticoagulant plasma protein; it is a cofactor to activated protein C in the degradation of coagulation factors Va and VIIIa. It helps to prevent coagulation and stimulating fibrinolysis. In Macaca mulatta (Rhesus macaque), this protein is Vitamin K-dependent protein S (PROS1).